The primary structure comprises 189 residues: Small ribosomal subunit protein uS7 (189 aa).

Belongs to the universal ribosomal protein uS7 family. Part of the 30S ribosomal subunit.

One of the primary rRNA binding proteins, it binds directly to 16S rRNA where it nucleates assembly of the head domain of the 30S subunit. Is located at the subunit interface close to the decoding center. This is Small ribosomal subunit protein uS7 from Methanosarcina mazei (strain ATCC BAA-159 / DSM 3647 / Goe1 / Go1 / JCM 11833 / OCM 88) (Methanosarcina frisia).